A 215-amino-acid chain; its full sequence is Deoxyribose-phosphate aldolase (215 aa).

Asp-90 functions as the Proton donor/acceptor in the catalytic mechanism. Lys-152 serves as the catalytic Schiff-base intermediate with acetaldehyde. Lys-181 acts as the Proton donor/acceptor in catalysis.

The protein belongs to the DeoC/FbaB aldolase family. DeoC type 1 subfamily.

It localises to the cytoplasm. It catalyses the reaction 2-deoxy-D-ribose 5-phosphate = D-glyceraldehyde 3-phosphate + acetaldehyde. Its pathway is carbohydrate degradation; 2-deoxy-D-ribose 1-phosphate degradation; D-glyceraldehyde 3-phosphate and acetaldehyde from 2-deoxy-alpha-D-ribose 1-phosphate: step 2/2. Its function is as follows. Catalyzes a reversible aldol reaction between acetaldehyde and D-glyceraldehyde 3-phosphate to generate 2-deoxy-D-ribose 5-phosphate. This Ureaplasma parvum serovar 3 (strain ATCC 27815 / 27 / NCTC 11736) protein is Deoxyribose-phosphate aldolase.